A 171-amino-acid polypeptide reads, in one-letter code: Crossover junction endodeoxyribonuclease RuvC (171 aa).

Catalysis depends on residues Asp7, Glu66, and Asp138. Mg(2+) is bound by residues Asp7, Glu66, and Asp138.

This sequence belongs to the RuvC family. Homodimer which binds Holliday junction (HJ) DNA. The HJ becomes 2-fold symmetrical on binding to RuvC with unstacked arms; it has a different conformation from HJ DNA in complex with RuvA. In the full resolvosome a probable DNA-RuvA(4)-RuvB(12)-RuvC(2) complex forms which resolves the HJ. Requires Mg(2+) as cofactor.

It localises to the cytoplasm. The catalysed reaction is Endonucleolytic cleavage at a junction such as a reciprocal single-stranded crossover between two homologous DNA duplexes (Holliday junction).. Its function is as follows. The RuvA-RuvB-RuvC complex processes Holliday junction (HJ) DNA during genetic recombination and DNA repair. Endonuclease that resolves HJ intermediates. Cleaves cruciform DNA by making single-stranded nicks across the HJ at symmetrical positions within the homologous arms, yielding a 5'-phosphate and a 3'-hydroxyl group; requires a central core of homology in the junction. The consensus cleavage sequence is 5'-(A/T)TT(C/G)-3'. Cleavage occurs on the 3'-side of the TT dinucleotide at the point of strand exchange. HJ branch migration catalyzed by RuvA-RuvB allows RuvC to scan DNA until it finds its consensus sequence, where it cleaves and resolves the cruciform DNA. The polypeptide is Crossover junction endodeoxyribonuclease RuvC (Francisella philomiragia subsp. philomiragia (strain ATCC 25017 / CCUG 19701 / FSC 153 / O#319-036)).